The following is a 452-amino-acid chain: UDP-N-acetylmuramoyl-L-alanine--L-glutamate ligase (452 aa).

ATP is bound at residue 118–124 (GSKGKST).

The protein belongs to the MurCDEF family. MurD2 subfamily.

It localises to the cytoplasm. It carries out the reaction UDP-N-acetyl-alpha-D-muramoyl-L-alanine + L-glutamate + ATP = UDP-N-acetyl-alpha-D-muramoyl-L-alanyl-L-glutamate + ADP + phosphate + H(+). It participates in cell wall biogenesis; peptidoglycan biosynthesis. Functionally, cell wall formation. Catalyzes the addition of L-glutamate to the nucleotide precursor UDP-N-acetylmuramoyl-L-alanine. The chain is UDP-N-acetylmuramoyl-L-alanine--L-glutamate ligase from Micromonospora sp. (strain ATCC 39149 / NRRL 15099 / SCC 1413).